A 195-amino-acid chain; its full sequence is ATP-dependent Clp protease proteolytic subunit 2 (195 aa).

Serine 98 serves as the catalytic Nucleophile. The active site involves histidine 123.

The protein belongs to the peptidase S14 family. As to quaternary structure, fourteen ClpP subunits assemble into 2 heptameric rings which stack back to back to give a disk-like structure with a central cavity, resembling the structure of eukaryotic proteasomes.

It is found in the cytoplasm. It carries out the reaction Hydrolysis of proteins to small peptides in the presence of ATP and magnesium. alpha-casein is the usual test substrate. In the absence of ATP, only oligopeptides shorter than five residues are hydrolyzed (such as succinyl-Leu-Tyr-|-NHMec, and Leu-Tyr-Leu-|-Tyr-Trp, in which cleavage of the -Tyr-|-Leu- and -Tyr-|-Trp bonds also occurs).. Its function is as follows. Cleaves peptides in various proteins in a process that requires ATP hydrolysis. Has a chymotrypsin-like activity. Plays a major role in the degradation of misfolded proteins. ClpXP2 is involved in the complete degradation of the Site-2 clipped anti-sigma-W factor RsiW. This results in the release of SigW and the transcription activation of the genes under the control of the sigma-W factor. The protein is ATP-dependent Clp protease proteolytic subunit 2 of Shouchella clausii (strain KSM-K16) (Alkalihalobacillus clausii).